The chain runs to 370 residues: NSFL1 cofactor p47 (370 aa).

The tract at residues 54–73 is disordered; sequence SQATPSSVSRGTAPSDNRVT. A phosphoserine mark is found at Ser-74, Ser-102, and Ser-114. Disordered regions lie at residues 80 to 116 and 138 to 157; these read HDQDEEEEEEEGQRFYAGGSERSGQQIVGPPRKKSPN and TKSPGETSKPRPFAGGGYRL. The Nuclear localization signal motif lies at 109-115; it reads PPRKKSP. Residue Ser-140 is modified to Phosphoserine; by CDK1. Phosphotyrosine is present on Tyr-167. The short motif at 172 to 175 is the Nuclear localization signal element; the sequence is RRRH. Phosphoserine is present on residues Ser-176, Ser-192, and Ser-272. One can recognise an SEP domain in the interval 179–244; the sequence is DVHVVLKLWK…MEDHRDEDFV (66 aa). One can recognise a UBX domain in the interval 291-368; sequence EAEPTTNIQI…NLLNAVIVQR (78 aa).

This sequence belongs to the NSFL1C family. In terms of assembly, part of a ternary complex containing STX5A, NSFL1C and VCP. NSFL1C forms a homotrimer that binds to one end of a VCP homohexamer. The complex binds to membranes enriched in phosphatidylethanolamine-containing lipids and promotes Golgi membrane fusion. Interaction with VCIP135 leads to dissociation of the complex via ATP hydrolysis by VCP. Binds ubiquitin and mono-ubiquitinated proteins via its N-terminal UBA-like domain when bound to VCP. Post-translationally, phosphorylated during mitosis. Phosphorylation inhibits interaction with Golgi membranes and is required for the fragmentation of the Golgi stacks during mitosis. In terms of tissue distribution, highly expressed in heart, brain, spleen, lung, liver, muscle, kidney and testis.

It localises to the nucleus. It is found in the golgi apparatus. The protein resides in the golgi stack. Its subcellular location is the chromosome. The protein localises to the cytoplasm. It localises to the cytoskeleton. It is found in the microtubule organizing center. The protein resides in the centrosome. Its function is as follows. Reduces the ATPase activity of VCP. Necessary for the fragmentation of Golgi stacks during mitosis and for VCP-mediated reassembly of Golgi stacks after mitosis. May play a role in VCP-mediated formation of transitional endoplasmic reticulum (tER). Inhibits the activity of CTSL (in vitro). Together with UBXN2B/p37, regulates the centrosomal levels of kinase AURKA/Aurora A during mitotic progression by promoting AURKA removal from centrosomes in prophase. Also, regulates spindle orientation during mitosis. This is NSFL1 cofactor p47 (Nsfl1c) from Rattus norvegicus (Rat).